A 132-amino-acid chain; its full sequence is Cytochrome c' (132 aa).

Heme c contacts are provided by Arg10, Gln11, Asp65, Cys122, Cys125, and His126.

Post-translationally, binds 1 heme c group covalently per subunit.

Its function is as follows. Cytochrome c' is the most widely occurring bacterial c-type cytochrome. Cytochromes c' are high-spin proteins and the heme has no sixth ligand. Their exact function is not known. The polypeptide is Cytochrome c' (Halomonas halodenitrificans (strain ATCC 12084 / NCIMB 8669) (Paracoccus halodenitrificans)).